Here is a 126-residue protein sequence, read N- to C-terminus: UPF0325 protein PBPRA2971 (126 aa).

Belongs to the UPF0325 family.

This Photobacterium profundum (strain SS9) protein is UPF0325 protein PBPRA2971.